Here is a 403-residue protein sequence, read N- to C-terminus: Multifunctional CCA protein (403 aa).

Positions 8 and 11 each coordinate ATP. The CTP site is built by G8 and R11. The Mg(2+) site is built by D21 and D23. ATP-binding residues include R91, R137, and R140. Residues R91, R137, and R140 each coordinate CTP. The HD domain occupies 228-329 (TGIHTLMVAK…LKVLGLLDVW (102 aa)).

It belongs to the tRNA nucleotidyltransferase/poly(A) polymerase family. Bacterial CCA-adding enzyme type 1 subfamily. As to quaternary structure, monomer. Can also form homodimers and oligomers. Requires Mg(2+) as cofactor. The cofactor is Ni(2+).

It catalyses the reaction a tRNA precursor + 2 CTP + ATP = a tRNA with a 3' CCA end + 3 diphosphate. The catalysed reaction is a tRNA with a 3' CCA end + 2 CTP + ATP = a tRNA with a 3' CCACCA end + 3 diphosphate. In terms of biological role, catalyzes the addition and repair of the essential 3'-terminal CCA sequence in tRNAs without using a nucleic acid template. Adds these three nucleotides in the order of C, C, and A to the tRNA nucleotide-73, using CTP and ATP as substrates and producing inorganic pyrophosphate. tRNA 3'-terminal CCA addition is required both for tRNA processing and repair. Also involved in tRNA surveillance by mediating tandem CCA addition to generate a CCACCA at the 3' terminus of unstable tRNAs. While stable tRNAs receive only 3'-terminal CCA, unstable tRNAs are marked with CCACCA and rapidly degraded. The chain is Multifunctional CCA protein from Vibrio cholerae serotype O1 (strain ATCC 39315 / El Tor Inaba N16961).